The chain runs to 278 residues: Large ribosomal subunit protein uL2 (278 aa).

The disordered stretch occupies residues 222–264 (RGVAMNPVDHPHGGGEGRTSGGRNPVTPWGVPTKGKKTRSNKR).

The protein belongs to the universal ribosomal protein uL2 family. Part of the 50S ribosomal subunit. Forms a bridge to the 30S subunit in the 70S ribosome.

Functionally, one of the primary rRNA binding proteins. Required for association of the 30S and 50S subunits to form the 70S ribosome, for tRNA binding and peptide bond formation. It has been suggested to have peptidyltransferase activity; this is somewhat controversial. Makes several contacts with the 16S rRNA in the 70S ribosome. This chain is Large ribosomal subunit protein uL2, found in Methylobacterium radiotolerans (strain ATCC 27329 / DSM 1819 / JCM 2831 / NBRC 15690 / NCIMB 10815 / 0-1).